Reading from the N-terminus, the 169-residue chain is Photosystem I assembly protein Ycf3 (169 aa).

TPR repeat units lie at residues Ala-35 to Pro-68, Ser-72 to Leu-105, and Gly-120 to Asn-153.

Belongs to the Ycf3 family.

The protein localises to the plastid. It localises to the chloroplast thylakoid membrane. Functionally, essential for the assembly of the photosystem I (PSI) complex. May act as a chaperone-like factor to guide the assembly of the PSI subunits. This chain is Photosystem I assembly protein Ycf3, found in Huperzia lucidula (Shining clubmoss).